The chain runs to 290 residues: Protease HtpX homolog (290 aa).

2 helical membrane-spanning segments follow: residues 4–24 (IFLFIATNIAVIAVMSVVLSL) and 39–59 (PMLLVFSLVVGFTGSIISLLI). Histidine 144 is a Zn(2+) binding site. Glutamate 145 is a catalytic residue. A Zn(2+)-binding site is contributed by histidine 148. Transmembrane regions (helical) follow at residues 159 to 179 (LVQGVVNTFVVFLSRVVGYFV) and 197 to 217 (ITVIVSQIVFGIAASVIVAWF). Glutamate 222 contributes to the Zn(2+) binding site.

The protein belongs to the peptidase M48B family. It depends on Zn(2+) as a cofactor.

The protein resides in the cell inner membrane. The chain is Protease HtpX homolog from Janthinobacterium sp. (strain Marseille) (Minibacterium massiliensis).